Reading from the N-terminus, the 37-residue chain is Natriuretic peptide PNP (37 aa).

A disulfide bridge connects residues C14 and C30.

Expressed by the venom gland.

It localises to the secreted. Its function is as follows. Increases urine flow and decreases blood pressure when administered to rats by intravenous injection. Inhibits thrombin-induced platelet aggregation. Stimulates cGMP production via the natriuretic peptide receptor-A (NPR1). The sequence is that of Natriuretic peptide PNP from Pseudocerastes persicus (Persian horned viper).